The chain runs to 170 residues: MAEVDEFSAFRHENDVSIEQRIVYFINSLIVALVPVYLYHAIFFMSIDDHMIIYGSVTLFAAIVLTFAYNNIYRMKRLKLSASREHISIASKNKVGDKKKFAAAQKEVQALVTSHEAIAASIMYNNAVFLICVSIFSFIIFKNVPLVYNYIISISLGAGLTSFLSTSSKH.

The Lumenal segment spans residues 1 to 24 (MAEVDEFSAFRHENDVSIEQRIVY). A helical membrane pass occupies residues 25–45 (FINSLIVALVPVYLYHAIFFM). Residues 46-51 (SIDDHM) are Cytoplasmic-facing. The chain crosses the membrane as a helical span at residues 52–72 (IIYGSVTLFAAIVLTFAYNNI). Residues 73-121 (YRMKRLKLSASREHISIASKNKVGDKKKFAAAQKEVQALVTSHEAIAAS) are Lumenal-facing. A helical transmembrane segment spans residues 122–141 (IMYNNAVFLICVSIFSFIIF). At 142–145 (KNVP) the chain is on the cytoplasmic side. A helical membrane pass occupies residues 146–168 (LVYNYIISISLGAGLTSFLSTSS).

It belongs to the TRAP-gamma family. In terms of assembly, heterotrimer of TRAP-alpha, TRAP-beta and TRAP-gamma.

Its subcellular location is the endoplasmic reticulum membrane. In terms of biological role, TRAP proteins are part of a complex whose function is to bind calcium to the ER membrane and thereby regulate the retention of ER resident proteins. The polypeptide is Translocon-associated protein subunit gamma (ssr3) (Dictyostelium discoideum (Social amoeba)).